The primary structure comprises 401 residues: Carboxybiotin decarboxylase (401 aa).

10 consecutive transmembrane segments (helical) span residues 20–40, 46–66, 70–90, 107–127, 131–151, 173–193, 244–264, 275–295, 306–326, and 380–400; these read VISITRIALIIFGFFLSYFGF, PLIMVPMGLGMIAINAGVLFL, VVGTIHLDPLVSEPSVLVNLM, LIACIVFFGIGAMSDISFILI, ASIIVALFAEMGTFATLIIGI, MVLFASLILAKDLFVPIAIIA, LCLLLPVASPLILSFFLGIAI, LLETTLTYGSTLFLGLLLGAL, ISLIVVLGITALLISGIGGVL, and VCGLIVSAIATGVFISTLFLL.

Its subcellular location is the cell membrane. It catalyses the reaction N(6)-carboxybiotinyl-L-lysyl-[protein] + n Na(+)(in) + H(+) = N(6)-biotinyl-L-lysyl-[protein] + n Na(+)(out) + CO2. Beta subunit of the biotin-dependent malonate decarboxylase multienzyme complex (EC 7.2.4.4). Acts as an integral membrane-bound carboxybiotin protein decarboxylase by releasing the carboxyl group of the carboxylated biotin carrier MADF. The free energy of the decarboxylation reaction is used to pump Na(+) out of the cell. The chain is Carboxybiotin decarboxylase (madB) from Malonomonas rubra.